The chain runs to 45 residues: Peroxidase 3 (45 aa).

The protein belongs to the peroxidase family. Classical plant (class III) peroxidase subfamily. Heme b is required as a cofactor. It depends on Ca(2+) as a cofactor.

It localises to the secreted. The catalysed reaction is 2 a phenolic donor + H2O2 = 2 a phenolic radical donor + 2 H2O. Functionally, removal of H(2)O(2), oxidation of toxic reductants, biosynthesis and degradation of lignin, suberization, auxin catabolism, response to environmental stresses such as wounding, pathogen attack and oxidative stress. These functions might be dependent on each isozyme/isoform in each plant tissue. The protein is Peroxidase 3 of Capsicum annuum (Capsicum pepper).